Here is a 229-residue protein sequence, read N- to C-terminus: Aminopyrimidine aminohydrolase (229 aa).

Residue Asp44 coordinates substrate. Residue Cys137 is the Nucleophile of the active site. 2 residues coordinate substrate: Tyr141 and Tyr167. The active-site Proton donor is Glu208.

Belongs to the TenA family. In terms of assembly, homotetramer.

It carries out the reaction 4-amino-5-aminomethyl-2-methylpyrimidine + H2O = 4-amino-5-hydroxymethyl-2-methylpyrimidine + NH4(+). It catalyses the reaction thiamine + H2O = 5-(2-hydroxyethyl)-4-methylthiazole + 4-amino-5-hydroxymethyl-2-methylpyrimidine + H(+). It participates in cofactor biosynthesis; thiamine diphosphate biosynthesis. In terms of biological role, catalyzes an amino-pyrimidine hydrolysis reaction at the C5' of the pyrimidine moiety of thiamine compounds, a reaction that is part of a thiamine salvage pathway. Thus, catalyzes the conversion of 4-amino-5-aminomethyl-2-methylpyrimidine to 4-amino-5-hydroxymethyl-2-methylpyrimidine (HMP). Is also able to catalyze the hydrolytic cleavage of thiamine; however, this thiaminase activity may not be physiologically relevant. Therefore, is probably involved in the regeneration of the thiamine pyrimidine from thiamine degraded products present in the environment, rather than in thiamine degradation. The chain is Aminopyrimidine aminohydrolase from Staphylococcus aureus (strain MRSA252).